The primary structure comprises 200 residues: Recombination protein RecR (200 aa).

The C4-type zinc-finger motif lies at 59–74 (CDICGNVCESSPCPVC). The 96-residue stretch at 82–177 (SVICVVEEPK…KVTRLASGLP (96 aa)) folds into the Toprim domain.

It belongs to the RecR family.

May play a role in DNA repair. It seems to be involved in an RecBC-independent recombinational process of DNA repair. It may act with RecF and RecO. The sequence is that of Recombination protein RecR from Bifidobacterium longum (strain DJO10A).